A 218-amino-acid polypeptide reads, in one-letter code: Protein THO1 (218 aa).

The SAP domain occupies 4 to 38 (YSSLTVVQLKDLLTKRNLSVGGLKNELVQRLIKDD). The residue at position 22 (serine 22) is a Phosphoserine. Disordered regions lie at residues 37-123 (DDEE…LSPE) and 177-218 (LVSR…GYRR). The span at 47 to 57 (VSPQEQNQEQG) shows a compositional bias: polar residues. A phosphoserine mark is found at serine 58 and serine 68. Positions 72–96 (TEKKEVSSEPKETNEPKEENKDVQK) are enriched in basic and acidic residues. 2 stretches are compositionally biased toward low complexity: residues 102 to 122 (SATASENEQAAASTAAPALSP) and 186 to 203 (SGNNGKFKNRNKNANNRS). Residues 204–218 (RVSKNRRGNRSGYRR) are compositionally biased toward basic residues.

Belongs to the SAP domain-containing ribonucleoprotein family. As to quaternary structure, interacts with SUB2 in the presence of RNA; this interaction facilitates RNA binding of SUB2.

Its function is as follows. Facilitates RNA binding of SUB2 and likely plays a role in mRNA export. Suppressor of the transcriptional defect of HPR1 by overexpression. In Saccharomyces cerevisiae (strain ATCC 204508 / S288c) (Baker's yeast), this protein is Protein THO1 (THO1).